Here is a 419-residue protein sequence, read N- to C-terminus: Chalcone synthase D (419 aa).

The active site involves Cys164.

The protein belongs to the thiolase-like superfamily. Chalcone/stilbene synthases family.

It catalyses the reaction (E)-4-coumaroyl-CoA + 3 malonyl-CoA + 3 H(+) = 2',4,4',6'-tetrahydroxychalcone + 3 CO2 + 4 CoA. It participates in secondary metabolite biosynthesis; flavonoid biosynthesis. The primary product of this enzyme is 4,2',4',6'-tetrahydroxychalcone (also termed naringenin-chalcone or chalcone) which can under specific conditions spontaneously isomerize into naringenin. The chain is Chalcone synthase D (CHSD) from Petunia hybrida (Petunia).